The sequence spans 241 residues: Beta-nerve growth factor (241 aa).

The signal sequence occupies residues methionine 1–alanine 18. Residues glutamate 19–arginine 121 constitute a propeptide that is removed on maturation. N-linked (GlcNAc...) asparagine glycosylation is found at asparagine 69 and asparagine 114. Disulfide bonds link cysteine 136–cysteine 201, cysteine 179–cysteine 229, and cysteine 189–cysteine 231. Residues arginine 171, tyrosine 173, and lysine 209 each contribute to the a 1-acyl-sn-glycero-3-phospho-(1D-myo-inositol) site. Arginine 171 provides a ligand contact to a 1-acyl-sn-glycero-3-phospho-L-serine. Residue lysine 209 participates in a 1-acyl-sn-glycero-3-phospho-L-serine binding.

Belongs to the NGF-beta family. Homodimer. The homodimer interacts with a single NTRK1 chain. The homodimer interacts with a single NGFR chain. The NGF dimer interacts with a single SORCS2 chain (via extracellular domain). The NGF precursor (proNGF) binds to a receptor complex formed by SORT1 and NGFR, which leads to NGF endocytosis. Both mature NGF and the immature NGF precursor (proNGF) interact with SORCS2 and with the heterodimer formed by SORCS2 and NGFR (via extracellular domains). The NGF precursor (proNGF) has much higher affinity for SORCS2 than mature NGF. The NGF precursor (proNGF) has much higher affinity for SORT1 than mature NGF. Interacts with ADAM10 in a divalent cation-dependent manner. Interacts with SORCS3. Detected in submaxillary gland (at protein level). Highly expressed in male submaxillary gland. Levels are much lower in female submaxillary gland.

Its subcellular location is the secreted. The protein resides in the endosome lumen. Its function is as follows. Nerve growth factor is important for the development and maintenance of the sympathetic and sensory nervous systems. Extracellular ligand for the NTRK1 and NGFR receptors, activates cellular signaling cascades to regulate neuronal proliferation, differentiation and survival. The immature NGF precursor (proNGF) functions as a ligand for the heterodimeric receptor formed by SORCS2 and NGFR, and activates cellular signaling cascades that lead to inactivation of RAC1 and/or RAC2, reorganization of the actin cytoskeleton and neuronal growth cone collapse. In contrast to mature NGF, the precursor form (proNGF) promotes neuronal apoptosis (in vitro). Inhibits metalloproteinase-dependent proteolysis of platelet glycoprotein VI. Binds lysophosphatidylinositol and lysophosphatidylserine between the two chains of the homodimer. The lipid-bound form promotes histamine relase from mast cells, contrary to the lipid-free form. The protein is Beta-nerve growth factor (Ngf) of Mus musculus (Mouse).